Consider the following 169-residue polypeptide: Eukaryotic translation initiation factor 5A-2 (169 aa).

At lysine 64 the chain carries Hypusine.

It belongs to the eIF-5A family. In terms of processing, lys-51 undergoes hypusination, a unique post-translational modification that consists in the addition of a butylamino group from spermidine to lysine side chain, leading to the formation of the unusual amino acid hypusine. eIF-5As are the only known proteins to undergo this modification, which is essential for their function.

Its subcellular location is the cytoplasm. It localises to the nucleus. Its function is as follows. Translation factor that promotes translation elongation and termination, particularly upon ribosome stalling at specific amino acid sequence contexts. Binds between the exit (E) and peptidyl (P) site of the ribosome and promotes rescue of stalled ribosome: specifically required for efficient translation of polyproline-containing peptides as well as other motifs that stall the ribosome. Acts as a ribosome quality control (RQC) cofactor by joining the RQC complex to facilitate peptidyl transfer during CAT tailing step. The sequence is that of Eukaryotic translation initiation factor 5A-2 (tif51b) from Schizosaccharomyces pombe (strain 972 / ATCC 24843) (Fission yeast).